Here is a 272-residue protein sequence, read N- to C-terminus: Glutamate racemase (272 aa).

Residues 9-10 (DS) and 41-42 (YG) contribute to the substrate site. C73 serves as the catalytic Proton donor/acceptor. Position 74 to 75 (74 to 75 (NT)) interacts with substrate. Residue C183 is the Proton donor/acceptor of the active site. Residue 184 to 185 (TH) participates in substrate binding.

This sequence belongs to the aspartate/glutamate racemases family.

The catalysed reaction is L-glutamate = D-glutamate. It participates in cell wall biogenesis; peptidoglycan biosynthesis. Functionally, provides the (R)-glutamate required for cell wall biosynthesis. This is Glutamate racemase from Shewanella sp. (strain MR-4).